Here is a 420-residue protein sequence, read N- to C-terminus: MGQETEISKRYQVAKERYQAIGVDTEKALKTLKDIKISMHCWQGDDVKGFLNPDGELTGGIMATGNYPGAAHTPKQLRQDLEKAYSLIPGKHKLNLHAIYVDTDEKVDLNEIEPKHFTPWVEWAKEQGLGLDFNPTFFSHPMFKDNYTLASPDKEVRDFWIEHGKRSRKISEYFGKELGQTSINNFWVPDGIKDCPIDRYTPRKRLMEALDEVFAEKLDEKYTQEAVESKLFGLGAEAYTVGSHEFYMGYGITRDKLICLDAGHFHPTEVISNKLSSLALFSKGVMLHVSRPVRWDSDHVVIMDDELIEIGRELVRNDLLGITNIGLDFFDATINRIAAWVVGTRNTQKSLLKALLEPTADLKKMELENDFTSRMAITEELKDFPFGDVWNYFCEINGVPVGLDWLKEVKAYEKDVLLKR.

3 residues coordinate Mn(2+): His-264, Asp-296, and Asp-298.

It belongs to the rhamnose isomerase family. Mn(2+) serves as cofactor.

It localises to the cytoplasm. The enzyme catalyses L-rhamnopyranose = L-rhamnulose. The protein operates within carbohydrate degradation; L-rhamnose degradation; glycerone phosphate from L-rhamnose: step 1/3. In terms of biological role, catalyzes the interconversion of L-rhamnose and L-rhamnulose. This chain is L-rhamnose isomerase, found in Listeria innocua serovar 6a (strain ATCC BAA-680 / CLIP 11262).